The primary structure comprises 440 residues: C4-dicarboxylate transport protein (440 aa).

Helical transmembrane passes span 15 to 35, 46 to 66, 78 to 98, 146 to 166, 190 to 210, 224 to 244, 291 to 311, 332 to 352, and 354 to 374; these read VLVA…TGVA, LIKM…IAGM, YALL…LVVV, AFAN…GFAL, IINM…AFTI, LMAC…GGIC, VVGL…SIYL, ITLL…TGSG, and IVLA…LALI. Residues 419 to 440 are disordered; it reads GGSPLVDTRPTDDLGVAEGPAR.

This sequence belongs to the dicarboxylate/amino acid:cation symporter (DAACS) (TC 2.A.23) family.

The protein localises to the cell inner membrane. Responsible for the transport of dicarboxylates such as succinate, fumarate, and malate from the periplasm across the membrane. The sequence is that of C4-dicarboxylate transport protein from Pseudomonas entomophila (strain L48).